The following is a 492-amino-acid chain: 2,3-bisphosphoglycerate-independent phosphoglycerate mutase (492 aa).

Mn(2+)-binding residues include D11 and S61. Catalysis depends on S61, which acts as the Phosphoserine intermediate. Substrate contacts are provided by residues H118, 147–148 (RD), R178, R184, 248–251 (RNDR), and K320. Mn(2+) contacts are provided by D386, H390, D427, H428, and H445.

This sequence belongs to the BPG-independent phosphoglycerate mutase family. As to quaternary structure, monomer. Mn(2+) serves as cofactor.

It carries out the reaction (2R)-2-phosphoglycerate = (2R)-3-phosphoglycerate. Its pathway is carbohydrate degradation; glycolysis; pyruvate from D-glyceraldehyde 3-phosphate: step 3/5. Catalyzes the interconversion of 2-phosphoglycerate and 3-phosphoglycerate. The protein is 2,3-bisphosphoglycerate-independent phosphoglycerate mutase of Campylobacter jejuni subsp. jejuni serotype O:23/36 (strain 81-176).